The following is a 462-amino-acid chain: GTPase Der (462 aa).

EngA-type G domains lie at 3–170 (ITIA…TSQK) and 201–372 (IKIA…FNSI). GTP-binding positions include 9–16 (GRTNVGKS), 57–61 (DTPGI), 122–125 (NKIE), 207–214 (GKPNVGKS), 254–258 (DTAGI), and 319–322 (NKND). A KH-like domain is found at 373–457 (KKIHTSKITE…SIVLYFKSSK (85 aa)).

This sequence belongs to the TRAFAC class TrmE-Era-EngA-EngB-Septin-like GTPase superfamily. EngA (Der) GTPase family. As to quaternary structure, associates with the 50S ribosomal subunit.

Its function is as follows. GTPase that plays an essential role in the late steps of ribosome biogenesis. The protein is GTPase Der of Buchnera aphidicola subsp. Baizongia pistaciae (strain Bp).